The primary structure comprises 403 residues: GTPase Obg (403 aa).

The region spanning 1–159 (MKFIDESLIR…RDLLLELMLL (159 aa)) is the Obg domain. The OBG-type G domain occupies 160–333 (ADVGMLGFPN…LCRDIMDFII (174 aa)). Residues 166 to 173 (GFPNAGKS), 191 to 195 (FTTLV), 213 to 216 (DIPG), 283 to 286 (NKID), and 314 to 316 (SAA) each bind GTP. Residues Ser173 and Thr193 each contribute to the Mg(2+) site. The disordered stretch occupies residues 363–403 (EYQFDDDEDWDDDWTEEDDDEDWDDDWTEEDDEGIEFIYKP). Acidic residues predominate over residues 365-397 (QFDDDEDWDDDWTEEDDDEDWDDDWTEEDDEGI).

It belongs to the TRAFAC class OBG-HflX-like GTPase superfamily. OBG GTPase family. As to quaternary structure, monomer. Requires Mg(2+) as cofactor.

It is found in the cytoplasm. Its function is as follows. An essential GTPase which binds GTP, GDP and possibly (p)ppGpp with moderate affinity, with high nucleotide exchange rates and a fairly low GTP hydrolysis rate. Plays a role in control of the cell cycle, stress response, ribosome biogenesis and in those bacteria that undergo differentiation, in morphogenesis control. The sequence is that of GTPase Obg from Haemophilus influenzae (strain PittEE).